A 141-amino-acid chain; its full sequence is Hemoglobin subunit alpha-A (141 aa).

One can recognise a Globin domain in the interval 1–141; it reads VLSGTDKTNV…VGAVLTAKYR (141 aa). Histidine 58 contacts O2. A heme b-binding site is contributed by histidine 87.

Belongs to the globin family. In terms of assembly, heterotetramer of two alpha chains and two beta chains. As to expression, red blood cells.

Its function is as follows. Involved in oxygen transport from the lung to the various peripheral tissues. The sequence is that of Hemoglobin subunit alpha-A (HBAA) from Struthio camelus (Common ostrich).